The chain runs to 89 residues: Progonadoliberin-1 (89 aa).

The N-terminal stretch at 1–23 (MKAFPTFALLFLVLLFSAHVSDA) is a signal peptide. At Gln24 the chain carries Pyrrolidone carboxylic acid. Position 33 is a glycine amide (Gly33).

This sequence belongs to the GnRH family. In terms of tissue distribution, expressed in the forebrain from larval stages.

It is found in the secreted. Its function is as follows. Stimulates the secretion of gonadotropins. This chain is Progonadoliberin-1 (gnrh1), found in Xenopus laevis (African clawed frog).